We begin with the raw amino-acid sequence, 81 residues long: RNA-binding protein Hfq (81 aa).

The region spanning 10–69 (DPFLNTLRKEHVPVSIYLVNGIKLQGQVDSFDQYVILLKNTVTQMVYKHAISTIVPGRAV) is the Sm domain.

This sequence belongs to the Hfq family. As to quaternary structure, homohexamer.

Its function is as follows. RNA chaperone that binds small regulatory RNA (sRNAs) and mRNAs to facilitate mRNA translational regulation in response to envelope stress, environmental stress and changes in metabolite concentrations. Also binds with high specificity to tRNAs. The polypeptide is RNA-binding protein Hfq (Methylobacillus flagellatus (strain ATCC 51484 / DSM 6875 / VKM B-1610 / KT)).